The primary structure comprises 505 residues: 4-trimethylaminobutyraldehyde dehydrogenase (505 aa).

NAD(+)-binding positions include K191 and 243–247; that span reads GSVPT. E265 acts as the Proton acceptor in catalysis. Catalysis depends on C299, which acts as the Nucleophile. E402 is a binding site for NAD(+).

It belongs to the aldehyde dehydrogenase family. In terms of assembly, homotetramer. In terms of tissue distribution, constitutively expressed in all organs tested: brain, eye, gill, GI, heart, liver, kidney, muscle, skin, testis and ovary.

Its subcellular location is the cytoplasm. It is found in the cytosol. The catalysed reaction is 4-(trimethylamino)butanal + NAD(+) + H2O = 4-(trimethylamino)butanoate + NADH + 2 H(+). It catalyses the reaction an aldehyde + NAD(+) + H2O = a carboxylate + NADH + 2 H(+). The protein operates within amine and polyamine biosynthesis; carnitine biosynthesis. In terms of biological role, converts gamma-trimethylaminobutyraldehyde into gamma-butyrobetaine with high efficiency (in vitro). Can catalyze the irreversible oxidation of a broad range of aldehydes to the corresponding acids in an NAD-dependent reaction, but with low efficiency. In Oryzias latipes (Japanese rice fish), this protein is 4-trimethylaminobutyraldehyde dehydrogenase (aldh9A1).